Consider the following 288-residue polypeptide: Acetyl-coenzyme A carboxylase carboxyl transferase subunit beta (288 aa).

A CoA carboxyltransferase N-terminal domain is found at 34-288 (LFAKCPGCKQ…TLLSFHGGVQ (255 aa)). Positions 38, 41, 56, and 59 each coordinate Zn(2+). A C4-type zinc finger spans residues 38–59 (CPGCKQAIYQKDLGQAKICPNC).

It belongs to the AccD/PCCB family. As to quaternary structure, acetyl-CoA carboxylase is a heterohexamer composed of biotin carboxyl carrier protein (AccB), biotin carboxylase (AccC) and two subunits each of ACCase subunit alpha (AccA) and ACCase subunit beta (AccD). Requires Zn(2+) as cofactor.

The protein localises to the cytoplasm. The catalysed reaction is N(6)-carboxybiotinyl-L-lysyl-[protein] + acetyl-CoA = N(6)-biotinyl-L-lysyl-[protein] + malonyl-CoA. The protein operates within lipid metabolism; malonyl-CoA biosynthesis; malonyl-CoA from acetyl-CoA: step 1/1. Functionally, component of the acetyl coenzyme A carboxylase (ACC) complex. Biotin carboxylase (BC) catalyzes the carboxylation of biotin on its carrier protein (BCCP) and then the CO(2) group is transferred by the transcarboxylase to acetyl-CoA to form malonyl-CoA. The polypeptide is Acetyl-coenzyme A carboxylase carboxyl transferase subunit beta (Streptococcus thermophilus (strain CNRZ 1066)).